Here is a 714-residue protein sequence, read N- to C-terminus: Hormonally up-regulated neu tumor-associated kinase (714 aa).

Low complexity predominate over residues 1–16; the sequence is MPAAAGDGLLGEPAAP. A disordered region spans residues 1–28; sequence MPAAAGDGLLGEPAAPGGDGGAEDTTRP. Residues 62–320 enclose the Protein kinase domain; that stretch reads LIGSRKLGEG…IQQALANRWL (259 aa). ATP is bound by residues 68 to 76 and lysine 91; that span reads LGEGSFAKV. Aspartate 186 acts as the Proton acceptor in catalysis. The segment covering 624–635 has biased composition (basic and acidic residues); that stretch reads HEEKNSPPKEEG. 2 disordered regions span residues 624–658 and 674–714; these read HEEKNSPPKEEGVCSPPPVPSNGLLQPLGSPNCVK and KRHQ…KGQC. Residues 692 to 703 show a composition bias toward polar residues; that stretch reads SPLQPTAPSSLS.

The protein belongs to the protein kinase superfamily. CAMK Ser/Thr protein kinase family. SNF1 subfamily.

The enzyme catalyses L-seryl-[protein] + ATP = O-phospho-L-seryl-[protein] + ADP + H(+). It catalyses the reaction L-threonyl-[protein] + ATP = O-phospho-L-threonyl-[protein] + ADP + H(+). The sequence is that of Hormonally up-regulated neu tumor-associated kinase (Hunk) from Mus musculus (Mouse).